The primary structure comprises 341 residues: Holliday junction branch migration complex subunit RuvB (341 aa).

Residues 1–180 (MAKSHTLNPE…FGIQLRLDYY (180 aa)) form a large ATPase domain (RuvB-L) region. ATP-binding residues include Leu19, Arg20, Gly61, Lys64, Thr65, Thr66, Arg170, Tyr180, and Arg217. Residue Thr65 participates in Mg(2+) binding. The segment at 181–251 (NDEEMKEIVL…LCLKAFEKMG (71 aa)) is small ATPAse domain (RuvB-S). The tract at residues 254 to 341 (DLGLDGMDRQ…ENHGQDPTLF (88 aa)) is head domain (RuvB-H). Positions 309 and 314 each coordinate DNA.

Belongs to the RuvB family. Homohexamer. Forms an RuvA(8)-RuvB(12)-Holliday junction (HJ) complex. HJ DNA is sandwiched between 2 RuvA tetramers; dsDNA enters through RuvA and exits via RuvB. An RuvB hexamer assembles on each DNA strand where it exits the tetramer. Each RuvB hexamer is contacted by two RuvA subunits (via domain III) on 2 adjacent RuvB subunits; this complex drives branch migration. In the full resolvosome a probable DNA-RuvA(4)-RuvB(12)-RuvC(2) complex forms which resolves the HJ.

It is found in the cytoplasm. It carries out the reaction ATP + H2O = ADP + phosphate + H(+). Its function is as follows. The RuvA-RuvB-RuvC complex processes Holliday junction (HJ) DNA during genetic recombination and DNA repair, while the RuvA-RuvB complex plays an important role in the rescue of blocked DNA replication forks via replication fork reversal (RFR). RuvA specifically binds to HJ cruciform DNA, conferring on it an open structure. The RuvB hexamer acts as an ATP-dependent pump, pulling dsDNA into and through the RuvAB complex. RuvB forms 2 homohexamers on either side of HJ DNA bound by 1 or 2 RuvA tetramers; 4 subunits per hexamer contact DNA at a time. Coordinated motions by a converter formed by DNA-disengaged RuvB subunits stimulates ATP hydrolysis and nucleotide exchange. Immobilization of the converter enables RuvB to convert the ATP-contained energy into a lever motion, pulling 2 nucleotides of DNA out of the RuvA tetramer per ATP hydrolyzed, thus driving DNA branch migration. The RuvB motors rotate together with the DNA substrate, which together with the progressing nucleotide cycle form the mechanistic basis for DNA recombination by continuous HJ branch migration. Branch migration allows RuvC to scan DNA until it finds its consensus sequence, where it cleaves and resolves cruciform DNA. This chain is Holliday junction branch migration complex subunit RuvB, found in Leptospira borgpetersenii serovar Hardjo-bovis (strain L550).